Here is a 635-residue protein sequence, read N- to C-terminus: MTALHSVSKTPAIKEEEEDGDERDGRGVPLGPRNHDYRGRKGDEESGADTVTSPITFEKKKIAPRASTHSEQSILSSISLKSMVNQHRQQQLQQESSTGAGTGFVDRKQQIQSPAMVSILRKNSAEENVRSSHSSKLGEGQIDGRKASASKEIGKTLPFTDDQRSNPELDPTNSVVDVSRGKNTKSKTVFNELEDDADDDDEVRQKNLTTQALRKLSSFKMNASSNLRLSKENKAKESSSSSTSSVSSSSTSKVENIVDKLTTTNSSSMSQLRFGNTNVIIDSVNHAAKPPHQQMLRKPSLEFLPQPASSTNLNFNSNKHKSNVRQISNPKKPLYIPAVLRKVSETNITNDDLLNATLSSYYKKASNLEHGFNPSKSQSASVQNANNLRIISSQSSVQSNTSSILESYKNKISSYLFPNSIPNSDRINLIPTISNRNSARVNPPTKDHWIPDSKRNSCRYCHKPFTLWERKHHCRHCGDIFCQDHLRHWLYLDSQANFIMINELNNGGINGGGTLCKICDDCLVEYENLSTTNHNANTNEDNINVEEGEDDDNDNRKKLRNYYKNRQMNALFRPKKGGSSQEHATVDRDTTTPIQVKSNDEEADNENTGGEQEEGNDVLGSVIGSVPANWNWSSF.

The segment at 1–110 is disordered; the sequence is MTALHSVSKT…GTGFVDRKQQ (110 aa). Residues 1 to 164 form a may play a role in attenuating TORC1 signaling region; sequence MTALHSVSKT…KTLPFTDDQR (164 aa). Basic and acidic residues predominate over residues 33–44; that stretch reads RNHDYRGRKGDE. Residues Ser46 and Ser53 each carry the phosphoserine modification. Thr56 is subject to Phosphothreonine. The segment covering 67-85 has biased composition (polar residues); it reads STHSEQSILSSISLKSMVN. A phosphoserine mark is found at Ser73, Ser113, Ser124, Ser148, Ser165, and Ser174. Disordered regions lie at residues 123–181 and 224–254; these read NSAE…VSRG and SSNLRLSKENKAKESSSSSTSSVSSSSTSKV. Residues 238-254 are compositionally biased toward low complexity; sequence SSSSSTSSVSSSSTSKV. Ser300, Ser309, and Ser381 each carry phosphoserine. The segment at 304 to 440 is required for interaction with TORC1; it reads LPQPASSTNL…PTISNRNSAR (137 aa). Residues 452–527 form an FYVE-type; atypical zinc finger; the sequence is DSKRNSCRYC…ICDDCLVEYE (76 aa). Residues Cys458, Cys461, Cys474, Cys477, Cys482, His485, Cys519, and Cys522 each coordinate Zn(2+). Disordered stretches follow at residues 534–557 and 570–623; these read HNANTNEDNINVEEGEDDDNDNRK and ALFR…GSVI. 2 stretches are compositionally biased toward acidic residues: residues 543–553 and 601–616; these read INVEEGEDDDN and EEADNENTGGEQEEGN. The interval 620–635 is may be required for TORC1 activation; the sequence is GSVIGSVPANWNWSSF.

Interacts with the TORC1 complex when activated by glutamine or cysteine. Interacts with TOR1; glutamine enhances the interaction. Interacts with KOG1; glutamine enhances the interaction. Interacts with TCO89. Interacts with LST8; glutamine enhances the interaction. Interacts with TOR2; glutamine enhances the interaction.

It localises to the vacuole membrane. With respect to regulation, activated by glutamine. May also be activated by cysteine. Functions as an intracellular glutamine sensor that directly activates the TORC1 signaling pathway, to promote cell growth when glutamine is available. May play a role in repressing NPR1 activity independently of TORC1 signaling. This Saccharomyces cerevisiae (strain ATCC 204508 / S288c) (Baker's yeast) protein is Glutamine sensor PIB2.